The sequence spans 1096 residues: Carbamoyl phosphate synthase large chain (1096 aa).

The interval 1–402 is carboxyphosphate synthetic domain; the sequence is MPKRDDINSV…ALQKALRSLE (402 aa). ATP is bound by residues Arg-129, Arg-169, Gly-175, Gly-176, Glu-208, Ile-210, Glu-215, Gly-241, Val-242, His-243, Gln-285, and Glu-299. In terms of domain architecture, ATP-grasp 1 spans 133-328; the sequence is KDLVIESGAD…IAKIAAKLAI (196 aa). Mg(2+) is bound by residues Gln-285, Glu-299, and Asn-301. 3 residues coordinate Mn(2+): Gln-285, Glu-299, and Asn-301. Residues 403–547 form an oligomerization domain region; it reads KRGSSFHWGP…YSSYDSETEI (145 aa). Residues 548–950 are carbamoyl phosphate synthetic domain; sequence VPSDRRKVII…AFAKSQEAAF (403 aa). The region spanning 676–870 is the ATP-grasp 2 domain; the sequence is SGILDTAGLV…LAKAASLVMV (195 aa). 10 residues coordinate ATP: Arg-712, Arg-754, Leu-756, Glu-761, Gly-786, Ile-787, His-788, Ser-789, Gln-829, and Glu-841. Positions 829, 841, and 843 each coordinate Mg(2+). Gln-829, Glu-841, and Asn-843 together coordinate Mn(2+). Positions 951–1095 constitute an MGS-like domain; sequence GGLPLSGTVF…QDYAIAREAR (145 aa). The segment at 951–1096 is allosteric domain; sequence GGLPLSGTVF…DYAIAREARR (146 aa).

It belongs to the CarB family. In terms of assembly, composed of two chains; the small (or glutamine) chain promotes the hydrolysis of glutamine to ammonia, which is used by the large (or ammonia) chain to synthesize carbamoyl phosphate. Tetramer of heterodimers (alpha,beta)4. Mg(2+) is required as a cofactor. The cofactor is Mn(2+).

It catalyses the reaction hydrogencarbonate + L-glutamine + 2 ATP + H2O = carbamoyl phosphate + L-glutamate + 2 ADP + phosphate + 2 H(+). The catalysed reaction is hydrogencarbonate + NH4(+) + 2 ATP = carbamoyl phosphate + 2 ADP + phosphate + 2 H(+). The protein operates within amino-acid biosynthesis; L-arginine biosynthesis; carbamoyl phosphate from bicarbonate: step 1/1. It functions in the pathway pyrimidine metabolism; UMP biosynthesis via de novo pathway; (S)-dihydroorotate from bicarbonate: step 1/3. Large subunit of the glutamine-dependent carbamoyl phosphate synthetase (CPSase). CPSase catalyzes the formation of carbamoyl phosphate from the ammonia moiety of glutamine, carbonate, and phosphate donated by ATP, constituting the first step of 2 biosynthetic pathways, one leading to arginine and/or urea and the other to pyrimidine nucleotides. The large subunit (synthetase) binds the substrates ammonia (free or transferred from glutamine from the small subunit), hydrogencarbonate and ATP and carries out an ATP-coupled ligase reaction, activating hydrogencarbonate by forming carboxy phosphate which reacts with ammonia to form carbamoyl phosphate. This is Carbamoyl phosphate synthase large chain from Clavibacter michiganensis subsp. michiganensis (strain NCPPB 382).